A 292-amino-acid polypeptide reads, in one-letter code: MKLGFIGLGIMGTPMAINLARAGHQLHVTTIGPVADELLSLGAVSVETARQVTEASDIIFIMVPDTPQVEEVLFGENGCTKASLKGKTIVDMSSISPIETKRFARQVNELGGDYLDAPVSGGEIGAREGTLSIMVGGDEAVFERVKPLFELLGKNITLVGGNGDGQTCKVANQIIVALNIEAVSEALLFASKAGADPVRVRQALMGGFASSRILEVHGERMIKRTFNPGFKIALHQKDLNLALQSAKALALNLPNTATCQELFNTCAANGGSQLDHSALVQALELMANHKLA.

Residues 4–18 and S94 each bind NAD(+); that span reads GFIG…MAIN. K169 is a catalytic residue. An NAD(+)-binding site is contributed by K237.

This sequence belongs to the HIBADH-related family.

The enzyme catalyses (R)-glycerate + NADP(+) = 2-hydroxy-3-oxopropanoate + NADPH + H(+). It carries out the reaction (R)-glycerate + NAD(+) = 2-hydroxy-3-oxopropanoate + NADH + H(+). It functions in the pathway organic acid metabolism; glycolate degradation; 3-phospho-D-glycerate from glycolate: step 3/4. The polypeptide is 2-hydroxy-3-oxopropionate reductase (glxR) (Escherichia coli (strain K12)).